The chain runs to 472 residues: Siroheme synthase 1 (472 aa).

Residues 1–203 form a precorrin-2 dehydrogenase /sirohydrochlorin ferrochelatase region; that stretch reads MDYLPLFADL…GQLAQAEEEL (203 aa). NAD(+) is bound by residues 22 to 23 and 43 to 44; these read EV and QT. Ser128 is modified (phosphoserine). The tract at residues 215–472 is uroporphyrinogen-III C-methyltransferase; sequence GEVALVGAGP…AISPSVVNLA (258 aa). Residue Pro224 participates in S-adenosyl-L-methionine binding. Asp247 serves as the catalytic Proton acceptor. Residue Lys269 is the Proton donor of the active site. S-adenosyl-L-methionine is bound by residues 300–302, Ile305, 330–331, Met382, and Gly411; these read GGD and TA.

The protein in the N-terminal section; belongs to the precorrin-2 dehydrogenase / sirohydrochlorin ferrochelatase family. In the C-terminal section; belongs to the precorrin methyltransferase family.

It catalyses the reaction uroporphyrinogen III + 2 S-adenosyl-L-methionine = precorrin-2 + 2 S-adenosyl-L-homocysteine + H(+). It carries out the reaction precorrin-2 + NAD(+) = sirohydrochlorin + NADH + 2 H(+). The enzyme catalyses siroheme + 2 H(+) = sirohydrochlorin + Fe(2+). Its pathway is cofactor biosynthesis; adenosylcobalamin biosynthesis; precorrin-2 from uroporphyrinogen III: step 1/1. The protein operates within cofactor biosynthesis; adenosylcobalamin biosynthesis; sirohydrochlorin from precorrin-2: step 1/1. It participates in porphyrin-containing compound metabolism; siroheme biosynthesis; precorrin-2 from uroporphyrinogen III: step 1/1. It functions in the pathway porphyrin-containing compound metabolism; siroheme biosynthesis; siroheme from sirohydrochlorin: step 1/1. Its pathway is porphyrin-containing compound metabolism; siroheme biosynthesis; sirohydrochlorin from precorrin-2: step 1/1. In terms of biological role, multifunctional enzyme that catalyzes the SAM-dependent methylations of uroporphyrinogen III at position C-2 and C-7 to form precorrin-2 via precorrin-1. Then it catalyzes the NAD-dependent ring dehydrogenation of precorrin-2 to yield sirohydrochlorin. Finally, it catalyzes the ferrochelation of sirohydrochlorin to yield siroheme. In Yersinia enterocolitica serotype O:8 / biotype 1B (strain NCTC 13174 / 8081), this protein is Siroheme synthase 1.